The chain runs to 141 residues: Lutropin subunit beta (141 aa).

The first 20 residues, 1–20 (MEMLQGLLLWLLLNVGGVWA), serve as a signal peptide directing secretion. 6 disulfides stabilise this stretch: C29–C77, C43–C92, C46–C130, C54–C108, C58–C110, and C113–C120. The N-linked (GlcNAc...) asparagine glycan is linked to N33.

This sequence belongs to the glycoprotein hormones subunit beta family. In terms of assembly, heterodimer of a common alpha chain and a unique beta chain which confers biological specificity to thyrotropin, lutropin, follitropin and gonadotropin.

The protein localises to the secreted. Its function is as follows. Promotes spermatogenesis and ovulation by stimulating the testes and ovaries to synthesize steroids. This chain is Lutropin subunit beta (LHB), found in Ailurus fulgens (Himalayan red panda).